Here is a 184-residue protein sequence, read N- to C-terminus: ATP synthase subunit delta (184 aa).

Belongs to the ATPase delta chain family. F-type ATPases have 2 components, F(1) - the catalytic core - and F(0) - the membrane proton channel. F(1) has five subunits: alpha(3), beta(3), gamma(1), delta(1), epsilon(1). F(0) has three main subunits: a(1), b(2) and c(10-14). The alpha and beta chains form an alternating ring which encloses part of the gamma chain. F(1) is attached to F(0) by a central stalk formed by the gamma and epsilon chains, while a peripheral stalk is formed by the delta and b chains.

It localises to the cell inner membrane. Its function is as follows. F(1)F(0) ATP synthase produces ATP from ADP in the presence of a proton or sodium gradient. F-type ATPases consist of two structural domains, F(1) containing the extramembraneous catalytic core and F(0) containing the membrane proton channel, linked together by a central stalk and a peripheral stalk. During catalysis, ATP synthesis in the catalytic domain of F(1) is coupled via a rotary mechanism of the central stalk subunits to proton translocation. Functionally, this protein is part of the stalk that links CF(0) to CF(1). It either transmits conformational changes from CF(0) to CF(1) or is implicated in proton conduction. The sequence is that of ATP synthase subunit delta from Dichelobacter nodosus (strain VCS1703A).